A 205-amino-acid polypeptide reads, in one-letter code: Glycerol-3-phosphate acyltransferase (205 aa).

The next 5 helical transmembrane spans lie at 6–26 (STVL…AVVV), 55–75 (KAAI…VWLV), 89–109 (VALV…FRFV), 120–140 (ILLA…LVIA), and 162–182 (ALMF…VLLI).

It belongs to the PlsY family. Probably interacts with PlsX.

It localises to the cell inner membrane. The enzyme catalyses an acyl phosphate + sn-glycerol 3-phosphate = a 1-acyl-sn-glycero-3-phosphate + phosphate. It functions in the pathway lipid metabolism; phospholipid metabolism. Its function is as follows. Catalyzes the transfer of an acyl group from acyl-phosphate (acyl-PO(4)) to glycerol-3-phosphate (G3P) to form lysophosphatidic acid (LPA). This enzyme utilizes acyl-phosphate as fatty acyl donor, but not acyl-CoA or acyl-ACP. The sequence is that of Glycerol-3-phosphate acyltransferase from Herminiimonas arsenicoxydans.